Reading from the N-terminus, the 387-residue chain is Trichocyst matrix protein T2-C (387 aa).

The first 19 residues, 1 to 19 (MKTIILALALIVLASSTQA), serve as a signal peptide directing secretion. Positions 20–48 (DVIATIKKIDQSPFGRTLFDTIWLELQTG) are excised as a propeptide. A coiled-coil region spans residues 51–163 (LDRLLQTLTD…KVLEHQEATA (113 aa)). A propeptide spanning residues 184 to 239 (KGKATKQPAHKFTKEVASMIQKHFTTSAKKAAKFQHRKGYSKLFKAFATIASKVEQ) is cleaved from the precursor. Residues 294–333 (TALANAQSDLAALNDVIAQVEASLDTTNQRIENVSADRND) are a coiled coil.

This sequence belongs to the TMP family. In terms of processing, two components are produced by post-translational processing from the precursor peptide.

The protein resides in the trichocyst. Its function is as follows. Structural protein that crystallize inside the trichocyst matrix. The polypeptide is Trichocyst matrix protein T2-C (T2C) (Paramecium tetraurelia).